Reading from the N-terminus, the 235-residue chain is Protein GrpE (235 aa).

Positions 1-18 are enriched in polar residues; the sequence is MTDGNQKPDGNSGEQVTV. Disordered stretches follow at residues 1–50 and 198–235; these read MTDG…DAAH and ESVD…PSGS. The segment covering 19 to 35 has biased composition (basic and acidic residues); sequence TDKRRIDPETGEVRHVP. Positions 215 to 235 are enriched in polar residues; that stretch reads ADQGNSADTSGEQAESEPSGS.

It belongs to the GrpE family. In terms of assembly, homodimer.

Its subcellular location is the cytoplasm. In terms of biological role, participates actively in the response to hyperosmotic and heat shock by preventing the aggregation of stress-denatured proteins, in association with DnaK and GrpE. It is the nucleotide exchange factor for DnaK and may function as a thermosensor. Unfolded proteins bind initially to DnaJ; upon interaction with the DnaJ-bound protein, DnaK hydrolyzes its bound ATP, resulting in the formation of a stable complex. GrpE releases ADP from DnaK; ATP binding to DnaK triggers the release of the substrate protein, thus completing the reaction cycle. Several rounds of ATP-dependent interactions between DnaJ, DnaK and GrpE are required for fully efficient folding. The polypeptide is Protein GrpE (Mycobacterium tuberculosis (strain ATCC 25177 / H37Ra)).